We begin with the raw amino-acid sequence, 78 residues long: MKFMLNATGLPLQDLVFGASVYFPPFFKAFAFGFVIWLVVHRLLRGWIYAGDIWHPLLMDLSLFAICVCLALAILIAW.

2 helical membrane-spanning segments follow: residues 20 to 40 (SVYF…WLVV) and 57 to 77 (LLMD…ILIA).

The protein localises to the cell membrane. This is an uncharacterized protein from Escherichia coli (strain K12).